Consider the following 164-residue polypeptide: Ecotin (164 aa).

A signal peptide spans 1–20 (MKMFVPAVVFAALASASAWA). A disulfide bridge connects residues cysteine 72 and cysteine 109.

The protein belongs to the protease inhibitor I11 (ecotin) family. Homodimer.

The protein resides in the periplasm. Its function is as follows. General inhibitor of pancreatic serine proteases: inhibits chymotrypsin, trypsin, elastases, factor X, kallikrein as well as a variety of other proteases. The sequence is that of Ecotin from Salmonella paratyphi A (strain ATCC 9150 / SARB42).